Consider the following 381-residue polypeptide: Tryptophan--tRNA ligase (381 aa).

The short motif at Pro82–His90 is the 'HIGH' region element. A 'KMSKS' region motif is present at residues Lys254–Ser258.

It belongs to the class-I aminoacyl-tRNA synthetase family.

It is found in the cytoplasm. The catalysed reaction is tRNA(Trp) + L-tryptophan + ATP = L-tryptophyl-tRNA(Trp) + AMP + diphosphate + H(+). This is Tryptophan--tRNA ligase from Sulfurisphaera tokodaii (strain DSM 16993 / JCM 10545 / NBRC 100140 / 7) (Sulfolobus tokodaii).